We begin with the raw amino-acid sequence, 135 residues long: Holo-[acyl-carrier-protein] synthase (135 aa).

2 residues coordinate Mg(2+): aspartate 8 and glutamate 58.

The protein belongs to the P-Pant transferase superfamily. AcpS family. It depends on Mg(2+) as a cofactor.

The protein localises to the cytoplasm. The catalysed reaction is apo-[ACP] + CoA = holo-[ACP] + adenosine 3',5'-bisphosphate + H(+). In terms of biological role, transfers the 4'-phosphopantetheine moiety from coenzyme A to a Ser of acyl-carrier-protein. This chain is Holo-[acyl-carrier-protein] synthase, found in Leuconostoc citreum (strain KM20).